The primary structure comprises 234 residues: Large ribosomal subunit protein uL1 (234 aa).

It belongs to the universal ribosomal protein uL1 family. In terms of assembly, part of the 50S ribosomal subunit.

In terms of biological role, binds directly to 23S rRNA. The L1 stalk is quite mobile in the ribosome, and is involved in E site tRNA release. Its function is as follows. Protein L1 is also a translational repressor protein, it controls the translation of the L11 operon by binding to its mRNA. The sequence is that of Large ribosomal subunit protein uL1 from Sulfurovum sp. (strain NBC37-1).